The following is a 101-amino-acid chain: Large ribosomal subunit protein bL21 (101 aa).

It belongs to the bacterial ribosomal protein bL21 family. Part of the 50S ribosomal subunit. Contacts protein L20.

Functionally, this protein binds to 23S rRNA in the presence of protein L20. The polypeptide is Large ribosomal subunit protein bL21 (Magnetococcus marinus (strain ATCC BAA-1437 / JCM 17883 / MC-1)).